We begin with the raw amino-acid sequence, 334 residues long: N-acetyl-gamma-glutamyl-phosphate reductase (334 aa).

The active site involves cysteine 154.

This sequence belongs to the NAGSA dehydrogenase family. Type 1 subfamily.

It is found in the cytoplasm. The enzyme catalyses N-acetyl-L-glutamate 5-semialdehyde + phosphate + NADP(+) = N-acetyl-L-glutamyl 5-phosphate + NADPH + H(+). It participates in amino-acid biosynthesis; L-arginine biosynthesis; N(2)-acetyl-L-ornithine from L-glutamate: step 3/4. In terms of biological role, catalyzes the NADPH-dependent reduction of N-acetyl-5-glutamyl phosphate to yield N-acetyl-L-glutamate 5-semialdehyde. The polypeptide is N-acetyl-gamma-glutamyl-phosphate reductase (Yersinia pestis).